Consider the following 169-residue polypeptide: Endoribonuclease YbeY (169 aa).

Residues Gly72–Glu95 are disordered. Residues His131, His135, and His141 each contribute to the Zn(2+) site.

This sequence belongs to the endoribonuclease YbeY family. The cofactor is Zn(2+).

It localises to the cytoplasm. In terms of biological role, single strand-specific metallo-endoribonuclease involved in late-stage 70S ribosome quality control and in maturation of the 3' terminus of the 16S rRNA. The protein is Endoribonuclease YbeY of Oleidesulfovibrio alaskensis (strain ATCC BAA-1058 / DSM 17464 / G20) (Desulfovibrio alaskensis).